The chain runs to 515 residues: 2-isopropylmalate synthase (515 aa).

Positions 4–266 (INIFDTTLRD…ETRLNLQEIK (263 aa)) constitute a Pyruvate carboxyltransferase domain. Mn(2+) is bound by residues Asp-13, His-201, His-203, and Asn-237. Residues 391-515 (QLSSLQVQYG…RAENQKVAMQ (125 aa)) form a regulatory domain region.

Belongs to the alpha-IPM synthase/homocitrate synthase family. LeuA type 1 subfamily. In terms of assembly, homodimer. Requires Mn(2+) as cofactor.

It is found in the cytoplasm. It carries out the reaction 3-methyl-2-oxobutanoate + acetyl-CoA + H2O = (2S)-2-isopropylmalate + CoA + H(+). The protein operates within amino-acid biosynthesis; L-leucine biosynthesis; L-leucine from 3-methyl-2-oxobutanoate: step 1/4. In terms of biological role, catalyzes the condensation of the acetyl group of acetyl-CoA with 3-methyl-2-oxobutanoate (2-ketoisovalerate) to form 3-carboxy-3-hydroxy-4-methylpentanoate (2-isopropylmalate). The sequence is that of 2-isopropylmalate synthase from Geobacillus sp. (strain WCH70).